Consider the following 336-residue polypeptide: MQIQNSHDLSSSNTLQLRSLAERFVELYTPADLSTLLMNPELKNLPWKILGGGSNLVLPSQIEGLVLKVSNLGRKLIHEDPDYWFVKAQAGEVWNDFVQWTLEEGYWGLENLSLIPGTVGAAPIQNIGAYGVEVKDTLWEVHALDLQTGEPRVFSNKECQFSYRDSYFKQEGAGRYLIWDVTFRLPKKNVLHLEYGDIRKEVERNNWPQDPRHVAQAVINIRQSKLPDPKVIGNAGSFFKNPIVSKELRDGLLSKHNDLVSFPYEDRYKLAAGWLIDRAGWKGKKLGPVGMYEKQALVLVNHGGATADDVWKLARQVSSDVHTQFGVEIEAEPIRW.

Positions 17–188 (LRSLAERFVE…WDVTFRLPKK (172 aa)) constitute an FAD-binding PCMH-type domain. Arginine 164 is an active-site residue. Residue serine 237 is the Proton donor of the active site. Glutamate 332 is a catalytic residue.

It belongs to the MurB family. The cofactor is FAD.

The protein localises to the cytoplasm. The enzyme catalyses UDP-N-acetyl-alpha-D-muramate + NADP(+) = UDP-N-acetyl-3-O-(1-carboxyvinyl)-alpha-D-glucosamine + NADPH + H(+). Its pathway is cell wall biogenesis; peptidoglycan biosynthesis. Functionally, cell wall formation. In Bdellovibrio bacteriovorus (strain ATCC 15356 / DSM 50701 / NCIMB 9529 / HD100), this protein is UDP-N-acetylenolpyruvoylglucosamine reductase.